Here is a 373-residue protein sequence, read N- to C-terminus: Probable quinol oxidase subunit 2 (373 aa).

A signal peptide spans Met-1–Gly-19. A lipid anchor (N-palmitoyl cysteine) is attached at Cys-20. A lipid anchor (S-diacylglycerol cysteine) is attached at Cys-20. 2 helical membrane-spanning segments follow: residues Phe-38–Phe-58 and Leu-82–Val-102. Composition is skewed to basic and acidic residues over residues Glu-292–Gly-320 and Glu-339–His-373. The disordered stretch occupies residues Glu-292–His-373.

This sequence belongs to the cytochrome c oxidase subunit 2 family.

The protein resides in the cell membrane. The enzyme catalyses 2 a quinol + O2 = 2 a quinone + 2 H2O. Its function is as follows. Catalyzes quinol oxidation with the concomitant reduction of oxygen to water. Subunit II transfers the electrons from a quinol to the binuclear center of the catalytic subunit I. This is Probable quinol oxidase subunit 2 (qoxA) from Staphylococcus saprophyticus subsp. saprophyticus (strain ATCC 15305 / DSM 20229 / NCIMB 8711 / NCTC 7292 / S-41).